Consider the following 116-residue polypeptide: Heme-degrading monooxygenase (116 aa).

Residues 2 to 92 form the ABM domain; that stretch reads VIVTNTSKIT…EYILENKISF (91 aa). Residue asparagine 6 coordinates Fe cation. A heme-binding site is contributed by histidine 76.

Belongs to the antibiotic biosynthesis monooxygenase family. Heme-degrading monooxygenase IsdG subfamily. As to quaternary structure, homodimer.

The protein resides in the cytoplasm. The catalysed reaction is heme b + 3 reduced [NADPH--hemoprotein reductase] + 3 O2 = biliverdin IXalpha + CO + Fe(2+) + 3 oxidized [NADPH--hemoprotein reductase] + 3 H2O + H(+). Allows bacterial pathogens to use the host heme as an iron source. Catalyzes the oxidative degradation of the heme macrocyclic porphyrin ring to the biliverdin in the presence of a suitable electron donor such as ascorbate or NADPH--cytochrome P450 reductase, with subsequent release of free iron. This Halalkalibacterium halodurans (strain ATCC BAA-125 / DSM 18197 / FERM 7344 / JCM 9153 / C-125) (Bacillus halodurans) protein is Heme-degrading monooxygenase.